Here is a 239-residue protein sequence, read N- to C-terminus: Ribulose-phosphate 3-epimerase (239 aa).

A substrate-binding site is contributed by Ser-9. His-34, Asp-36, and His-78 together coordinate a divalent metal cation. Asp-36 (proton acceptor) is an active-site residue. Substrate contacts are provided by residues His-78, 154–157, 183–185, and 205–207; these read GFGG, DGG, and GTS. Asp-183 is an a divalent metal cation binding site. Asp-183 acts as the Proton donor in catalysis.

It belongs to the ribulose-phosphate 3-epimerase family. It depends on Co(2+) as a cofactor. The cofactor is Fe(2+). Mn(2+) is required as a cofactor. Zn(2+) serves as cofactor.

It catalyses the reaction D-ribulose 5-phosphate = D-xylulose 5-phosphate. It participates in carbohydrate degradation; pentose phosphate pathway; D-xylulose 5-phosphate from D-ribulose 5-phosphate (non-oxidative stage): step 1/1. Functionally, catalyzes the reversible epimerization of D-ribulose 5-phosphate to D-xylulose 5-phosphate. The chain is Ribulose-phosphate 3-epimerase (RPE1) from Eremothecium gossypii (strain ATCC 10895 / CBS 109.51 / FGSC 9923 / NRRL Y-1056) (Yeast).